A 339-amino-acid chain; its full sequence is Fructose-1,6-bisphosphatase isozyme 2 (339 aa).

The segment at 3-10 is important for interaction with ALDOA; the sequence is DRSPFETD. AMP-binding positions include Val18 and 28 to 32; that span reads TGELT. Residues Asp69 and Glu98 each contribute to the Mg(2+) site. Residue 113 to 114 coordinates AMP; sequence KY. Residues Asp119, Leu121, and Asp122 each coordinate Mg(2+). Residue Asp122 participates in substrate binding. Arg141 is a binding site for AMP. A Nuclear localization signal motif is present at residues 204-208; it reads KKKGK. A substrate-binding site is contributed by 213 to 216; sequence NEGY. Phosphotyrosine is present on residues Tyr216 and Tyr219. Residues 245–249, Tyr265, and Lys275 each bind substrate; that span reads YVGSM. Glu281 is a Mg(2+) binding site.

It belongs to the FBPase class 1 family. As to quaternary structure, homotetramer. Interacts with ALDOA; the interaction blocks inhibition by physiological concentrations of AMP and reduces inhibition by Ca(2+). Interacts with alpha-actinin and F-actin. It depends on Mg(2+) as a cofactor.

The protein localises to the cell junction. Its subcellular location is the cytoplasm. It localises to the nucleus. It is found in the myofibril. The protein resides in the sarcomere. The protein localises to the z line. The catalysed reaction is beta-D-fructose 1,6-bisphosphate + H2O = beta-D-fructose 6-phosphate + phosphate. The protein operates within carbohydrate biosynthesis; gluconeogenesis. Subject to complex allosteric regulation. The enzyme can assume an active R-state, or an inactive T-state. Intermediate conformations may exist. AMP acts as an allosteric inhibitor. Fructose 2,6-bisphosphate acts as a competitive inhibitor. Strongly inhibited by Ca(2+). Its function is as follows. Catalyzes the hydrolysis of fructose 1,6-bisphosphate to fructose 6-phosphate in the presence of divalent cations and probably participates in glycogen synthesis from carbohydrate precursors, such as lactate. The protein is Fructose-1,6-bisphosphatase isozyme 2 (FBP2) of Bos taurus (Bovine).